Here is a 391-residue protein sequence, read N- to C-terminus: Elongation factor Tu 1 (391 aa).

The region spanning 10 to 201 is the tr-type G domain; that stretch reads KPHVNIGTIG…AVDSYIPTPE (192 aa). Positions 19-26 are G1; it reads GHVDHGKT. 19–26 provides a ligand contact to GTP; sequence GHVDHGKT. Thr-26 contacts Mg(2+). Residues 55–59 form a G2 region; sequence GITIS. The tract at residues 76–79 is G3; it reads DCPG. Residues 76–80 and 131–134 contribute to the GTP site; these read DCPGH and NKVD. The G4 stretch occupies residues 131–134; the sequence is NKVD. The G5 stretch occupies residues 169–171; it reads SAL.

The protein belongs to the TRAFAC class translation factor GTPase superfamily. Classic translation factor GTPase family. EF-Tu/EF-1A subfamily. As to quaternary structure, monomer.

It is found in the cytoplasm. The enzyme catalyses GTP + H2O = GDP + phosphate + H(+). GTP hydrolase that promotes the GTP-dependent binding of aminoacyl-tRNA to the A-site of ribosomes during protein biosynthesis. In Rhizobium etli (strain ATCC 51251 / DSM 11541 / JCM 21823 / NBRC 15573 / CFN 42), this protein is Elongation factor Tu 1.